The chain runs to 182 residues: Endoribonuclease YbeY (182 aa).

Zn(2+) is bound by residues H115, H119, and H125.

Belongs to the endoribonuclease YbeY family. Zn(2+) serves as cofactor.

The protein resides in the cytoplasm. Its function is as follows. Single strand-specific metallo-endoribonuclease involved in late-stage 70S ribosome quality control and in maturation of the 3' terminus of the 16S rRNA. In Bifidobacterium longum subsp. infantis (strain ATCC 15697 / DSM 20088 / JCM 1222 / NCTC 11817 / S12), this protein is Endoribonuclease YbeY.